The primary structure comprises 308 residues: UDP-N-acetylenolpyruvoylglucosamine reductase (308 aa).

Residues 35 to 200 (RVGGPAQVLF…TSARFRGEPM (166 aa)) form the FAD-binding PCMH-type domain. Residue Arg180 is part of the active site. Residues 211 to 226 (EVQRHRETAQPVREKT) are compositionally biased toward basic and acidic residues. The interval 211–236 (EVQRHRETAQPVREKTGGSTFKNPPG) is disordered. Ser229 serves as the catalytic Proton donor. Glu299 is a catalytic residue.

This sequence belongs to the MurB family. The cofactor is FAD.

The protein resides in the cytoplasm. The enzyme catalyses UDP-N-acetyl-alpha-D-muramate + NADP(+) = UDP-N-acetyl-3-O-(1-carboxyvinyl)-alpha-D-glucosamine + NADPH + H(+). Its pathway is cell wall biogenesis; peptidoglycan biosynthesis. In terms of biological role, cell wall formation. This is UDP-N-acetylenolpyruvoylglucosamine reductase from Rhodopseudomonas palustris (strain BisB18).